The sequence spans 152 residues: NAD(P)H-quinone oxidoreductase subunit N (152 aa).

Belongs to the complex I NdhN subunit family. As to quaternary structure, NDH-1 can be composed of about 15 different subunits; different subcomplexes with different compositions have been identified which probably have different functions.

The protein resides in the cellular thylakoid membrane. The catalysed reaction is a plastoquinone + NADH + (n+1) H(+)(in) = a plastoquinol + NAD(+) + n H(+)(out). It catalyses the reaction a plastoquinone + NADPH + (n+1) H(+)(in) = a plastoquinol + NADP(+) + n H(+)(out). NDH-1 shuttles electrons from an unknown electron donor, via FMN and iron-sulfur (Fe-S) centers, to quinones in the respiratory and/or the photosynthetic chain. The immediate electron acceptor for the enzyme in this species is believed to be plastoquinone. Couples the redox reaction to proton translocation, and thus conserves the redox energy in a proton gradient. Cyanobacterial NDH-1 also plays a role in inorganic carbon-concentration. This Prochlorococcus marinus (strain SARG / CCMP1375 / SS120) protein is NAD(P)H-quinone oxidoreductase subunit N.